Consider the following 279-residue polypeptide: Bifunctional protein FolD 1 (279 aa).

Residues 166–168 (GRS) and S191 each bind NADP(+).

Belongs to the tetrahydrofolate dehydrogenase/cyclohydrolase family. Homodimer.

It catalyses the reaction (6R)-5,10-methylene-5,6,7,8-tetrahydrofolate + NADP(+) = (6R)-5,10-methenyltetrahydrofolate + NADPH. The catalysed reaction is (6R)-5,10-methenyltetrahydrofolate + H2O = (6R)-10-formyltetrahydrofolate + H(+). Its pathway is one-carbon metabolism; tetrahydrofolate interconversion. Its function is as follows. Catalyzes the oxidation of 5,10-methylenetetrahydrofolate to 5,10-methenyltetrahydrofolate and then the hydrolysis of 5,10-methenyltetrahydrofolate to 10-formyltetrahydrofolate. The protein is Bifunctional protein FolD 1 of Salinispora arenicola (strain CNS-205).